A 351-amino-acid chain; its full sequence is Cell shape-determining protein MreB (351 aa).

Residues 20 to 22, 169 to 171, 217 to 220, and 299 to 302 each bind ATP; these read TAN, GGT, ERIK, and GGAL.

Belongs to the FtsA/MreB family. Forms polymers.

It is found in the cytoplasm. Functionally, forms membrane-associated dynamic filaments that are essential for cell shape determination. Acts by regulating cell wall synthesis and cell elongation, and thus cell shape. A feedback loop between cell geometry and MreB localization may maintain elongated cell shape by targeting cell wall growth to regions of negative cell wall curvature. The protein is Cell shape-determining protein MreB of Haemophilus influenzae (strain ATCC 51907 / DSM 11121 / KW20 / Rd).